The primary structure comprises 551 residues: MASLKLKKRDNGAEPDKKKLVIAGIRHQLLLLLRRRHRLFPLVSAVSGCLLLILFSFSTLSPPPLIHHNNQVAVEPNPTTPFRVPENGGRSDRQLWSSRLSNLYYACSNATDTFQVTDTRSQTNRYLLIATSGGLNQQRTGIIDAVVAAYILNATLVVPKLDQKSYWKDTSNFEDIFDVDWFISHLSKDVKIIKELPKEEQSRISTSLQSMRVPRKCTPSCYLQRVLPILTKKHVVQLSKFDYRLSNALDTELQKLRCRVNYHAVRYTESINRMGQLLVDRMRKKAKHFVALHLRFEPDMLAFSGCYYGGGQKERLELGAMRRRWKTLHAANPEKVRRHGRCPLTPEEIGLMLRGLGFGKEVHLYVASGEVYGGEDTLAPLRALFPNLHTKETLTSKKELAPFANFSSRMAALDFIVCDKSDAFVTNNNGNMARILAGRRRYLGHKVTIRPNAKKLYEIFKNRHNMTWGEFSSKVRRYQTGFMGEPDEMKPGEGEFHENPASCICRTSEARVKEKAKHVNEDDSSEYSEIGNVPISSRSDLDHSQFDEVIF.

A helical; Signal-anchor for type II membrane protein membrane pass occupies residues 39-59 (LFPLVSAVSGCLLLILFSFST). Asparagine 109 and asparagine 153 each carry an N-linked (GlcNAc...) asparagine glycan. 293 to 295 (HLR) contributes to the substrate binding site. Asparagine 405 and asparagine 465 each carry an N-linked (GlcNAc...) asparagine glycan. Residues 515–539 (KAKHVNEDDSSEYSEIGNVPISSRS) form a disordered region.

It belongs to the glycosyltransferase GT106 family. In terms of tissue distribution, specifically expressed in the root hair.

It localises to the membrane. The protein operates within glycan metabolism. The protein is Protein ROOT HAIR SPECIFIC 17 of Arabidopsis thaliana (Mouse-ear cress).